The following is a 343-amino-acid chain: Protein RecA (343 aa).

Belongs to the RecA family.

The protein resides in the cytoplasm. Can catalyze the hydrolysis of ATP in the presence of single-stranded DNA, the ATP-dependent uptake of single-stranded DNA by duplex DNA, and the ATP-dependent hybridization of homologous single-stranded DNAs. It interacts with LexA causing its activation and leading to its autocatalytic cleavage. The sequence is that of Protein RecA from Coxiella burnetii (strain RSA 493 / Nine Mile phase I).